Consider the following 503-residue polypeptide: Maturase K (503 aa).

The protein belongs to the intron maturase 2 family. MatK subfamily.

Its subcellular location is the plastid. It localises to the chloroplast. In terms of biological role, usually encoded in the trnK tRNA gene intron. Probably assists in splicing its own and other chloroplast group II introns. This Rosa foetida (Austrian briar) protein is Maturase K.